The following is a 219-amino-acid chain: tRNA (guanine-N(7)-)-methyltransferase (219 aa).

S-adenosyl-L-methionine contacts are provided by E43, D68, E101, and N124. Residues K128 and D160 each contribute to the substrate site.

It belongs to the class I-like SAM-binding methyltransferase superfamily. TrmB family.

The enzyme catalyses guanosine(46) in tRNA + S-adenosyl-L-methionine = N(7)-methylguanosine(46) in tRNA + S-adenosyl-L-homocysteine. It participates in tRNA modification; N(7)-methylguanine-tRNA biosynthesis. In terms of biological role, catalyzes the formation of N(7)-methylguanine at position 46 (m7G46) in tRNA. The sequence is that of tRNA (guanine-N(7)-)-methyltransferase from Clostridium botulinum (strain Eklund 17B / Type B).